Here is a 243-residue protein sequence, read N- to C-terminus: Ubiquinone/menaquinone biosynthesis C-methyltransferase UbiE (243 aa).

S-adenosyl-L-methionine is bound by residues Thr-69, Asp-90, and 116 to 117 (DA).

The protein belongs to the class I-like SAM-binding methyltransferase superfamily. MenG/UbiE family.

It carries out the reaction a 2-demethylmenaquinol + S-adenosyl-L-methionine = a menaquinol + S-adenosyl-L-homocysteine + H(+). The catalysed reaction is a 2-methoxy-6-(all-trans-polyprenyl)benzene-1,4-diol + S-adenosyl-L-methionine = a 5-methoxy-2-methyl-3-(all-trans-polyprenyl)benzene-1,4-diol + S-adenosyl-L-homocysteine + H(+). It participates in quinol/quinone metabolism; menaquinone biosynthesis; menaquinol from 1,4-dihydroxy-2-naphthoate: step 2/2. The protein operates within cofactor biosynthesis; ubiquinone biosynthesis. Methyltransferase required for the conversion of demethylmenaquinol (DMKH2) to menaquinol (MKH2) and the conversion of 2-polyprenyl-6-methoxy-1,4-benzoquinol (DDMQH2) to 2-polyprenyl-3-methyl-6-methoxy-1,4-benzoquinol (DMQH2). The chain is Ubiquinone/menaquinone biosynthesis C-methyltransferase UbiE from Ralstonia nicotianae (strain ATCC BAA-1114 / GMI1000) (Ralstonia solanacearum).